A 355-amino-acid chain; its full sequence is Vacuolar protein sorting-associated protein 37C (355 aa).

A Phosphoserine modification is found at serine 29. Residues 78–167 form the VPS37 C-terminal domain; that stretch reads VERCQEQKAK…RKPRASQELA (90 aa). The disordered stretch occupies residues 159 to 355; it reads KPRASQELAG…PPPGPAWPGY (197 aa). 2 stretches are compositionally biased toward pro residues: residues 170–186 and 194–214; these read APPP…PQGT and PQPP…PSLP. A compositionally biased stretch (low complexity) spans 291–304; that stretch reads APSPGYPQQSPYPA. The span at 321–355 shows a compositional bias: pro residues; that stretch reads PGQPQPSVPLQPPYPPGPAPPYGFPPPPGPAWPGY.

Belongs to the VPS37 family. Component of the ESCRT-I complex (endosomal sorting complex required for transport I) which consists of TSG101, VPS28, a VPS37 protein (VPS37A to -D) and MVB12A or MVB12B in a 1:1:1:1 stoichiometry. Interacts with TSG101, VPS28, MVB12A and MVB12B. Component of the ESCRT-I complex (endosomal sorting complex required for transport I) which consists of TSG101, VPS28, a VPS37 protein (VPS37A to -D) and UBAP1 in a 1:1:1:1 stoichiometry. Interacts with HGS and STAM2. Interacts with CEP55. Phosphorylated by TBK1.

It is found in the late endosome membrane. In terms of biological role, component of the ESCRT-I complex, a regulator of vesicular trafficking process. Required for the sorting of endocytic ubiquitinated cargos into multivesicular bodies. May be involved in cell growth and differentiation. The chain is Vacuolar protein sorting-associated protein 37C (VPS37C) from Homo sapiens (Human).